The chain runs to 263 residues: uncharacterized protein (263 aa).

The region spanning 12–247 (LETQNLAIGY…ENLAKIYRTS (236 aa)) is the ABC transporter domain. 44–51 (GANGAGKS) is a binding site for ATP.

This sequence belongs to the ABC transporter superfamily.

This is an uncharacterized protein from Haemophilus influenzae (strain ATCC 51907 / DSM 11121 / KW20 / Rd).